The primary structure comprises 308 residues: Olfactory receptor OR9H1 (308 aa).

Residues 1–26 (MVNFTHVSEFVLLGFQGGPGMQAMLF) lie on the Extracellular side of the membrane. Residues 27–47 (LIFLILYGIAVVGNLGMIVII) traverse the membrane as a helical segment. The Cytoplasmic segment spans residues 48-58 (WVDAHLHTPMY). Residues 59-81 (AFLQSLSLLDICYSSTIAPRALA) form a helical membrane-spanning segment. Residues 82-95 (NSMQEDHTISFGGC) are Extracellular-facing. Cysteine 95 and cysteine 177 form a disulfide bridge. A helical transmembrane segment spans residues 96 to 116 (AAQFFFLSLFGITEAFLLAAM). At 117 to 137 (AYDRFIAICNPLLYSVSMSHQ) the chain is on the cytoplasmic side. Residues 138-158 (VCVLLISGSYLWGVVNAIAQT) traverse the membrane as a helical segment. The Extracellular segment spans residues 159-203 (TMTFRLPFCGSNEINDFFCDVPPLLSLSCSDTFINQLVLLGLCGS). The chain crosses the membrane as a helical span at residues 204–224 (IIVSTFLIVLVSYIYIISTIL). Over 225 to 245 (RIPTMQGCQKAFSTCASHLTG) the chain is Cytoplasmic. Residues 246-266 (VCLFFGTVFFMYAQPSAIFFM) traverse the membrane as a helical segment. Residues 267 to 269 (EQS) are Extracellular-facing. The chain crosses the membrane as a helical span at residues 270–290 (KIVSIFYTMVIPMLNPLIYSL). The Cytoplasmic portion of the chain corresponds to 291–308 (RNKEVKQALRRSMQKLSL).

It belongs to the G-protein coupled receptor 1 family.

The protein localises to the cell membrane. Odorant receptor. The sequence is that of Olfactory receptor OR9H1 from Homo sapiens (Human).